Reading from the N-terminus, the 494-residue chain is Voltage-gated potassium channel regulatory subunit KCNF1 (494 aa).

Topologically, residues 1-183 (MDGSGERSLP…KPESSCPARV (183 aa)) are cytoplasmic. The chain crosses the membrane as a helical span at residues 184–204 (VAVLSFLLILVSSVVMCMGTI). A helical transmembrane segment spans residues 224 to 244 (NVETACIGWFTLEYLLRLFSS). Residues 245 to 249 (PNKLH) are Cytoplasmic-facing. A helical membrane pass occupies residues 250–270 (FALSFMNIVDVLAILPFYVSL). A helical; Voltage-sensor transmembrane segment spans residues 290 to 310 (QALRIMRIARIFKLARHSSGL). At 311–324 (QTLTYALKRSFKEL) the chain is on the cytoplasmic side. The chain crosses the membrane as a helical span at residues 325 to 345 (GLLLMYLAVGIFVFSALGYTM). The pore-forming intramembrane region spans 358 to 378 (PQSFWWAIITMTTVGYGDIYP). The short motif at 370 to 375 (TVGYGD) is the Selectivity filter element. Residues 386-406 (NAAISFLCGVIAIALPIHPII) traverse the membrane as a helical segment. Over 407 to 494 (NNFVRYYNKQ…HHRTRLQSCK (88 aa)) the chain is Cytoplasmic. Residues 433–469 (NSSSGGEGKTGGSRSDLDNLPPEPAGKEAPSCSSRLK) are disordered.

It belongs to the potassium channel family. F (TC 1.A.1.2) subfamily. Kv5.1/KCNF1 sub-subfamily. Heterotetramer with KCNB1 or KCNB2. As to expression, detected in heart, brain, liver, skeletal muscle, kidney and pancreas.

It localises to the cell membrane. Its function is as follows. Regulatory alpha-subunit of the voltage-gated potassium (Kv) channel which, when coassembled with KCNB1 or KCNB2, can modulate their expression and their gating kinetics by acting on deactivation upon repolarization and inactivation during maintained depolarization. Accelerates inactivation but has relatively little effect on deactivation. Coexpression with KCNB1 or KCNB2 markedly slows inactivation. Each modulatory subunit has its own specific properties of regulation, and can lead to extensive inhibitions, to large changes in kinetics, and/or to large shifts in the voltage dependencies of the inactivation process. The gating kinetics depends on the nature and stoichiometry of the associated regulatory sunbunit. Fails to produce a potassium current when expressed alone. In Homo sapiens (Human), this protein is Voltage-gated potassium channel regulatory subunit KCNF1.